A 975-amino-acid polypeptide reads, in one-letter code: Synaptopodin 2-like protein (975 aa).

One can recognise a PDZ domain in the interval 6 to 85 (EVQVTLAGGA…QLVLTVRRVT (80 aa)). Disordered stretches follow at residues 18–41 (GFRLQGGTEQRKPLQIRRRSQAGR), 86–214 (DEGS…PAEA), and 314–349 (AGTGTEEEDGIPPTSESELDEETFSDARSLTNQSDW). A phosphoserine mark is found at Ser-105 and Ser-108. Position 138 is a phosphothreonine (Thr-138). Residues Ser-140, Ser-163, Ser-175, and Ser-177 each carry the phosphoserine modification. Positions 187 to 200 (GSPSQGDSRVSSPS) are enriched in polar residues. The span at 202 to 214 (EEGAALQPPPAEA) shows a compositional bias: low complexity. Residues 339 to 349 (DARSLTNQSDW) show a composition bias toward polar residues. A phosphoserine mark is found at Ser-342, Ser-347, Ser-371, Ser-378, and Ser-381. Arg-383, Arg-463, Arg-466, and Arg-476 each carry omega-N-methylarginine. The disordered stretch occupies residues 491–649 (KVNEGLGSTS…ETKNSPNPEL (159 aa)). A compositionally biased stretch (pro residues) spans 502–516 (APSPFAAPPQGPTPL). The segment covering 519–528 (FTTVVPSHTP) has biased composition (polar residues). Low complexity-rich tracts occupy residues 530–540 (SGASSSTQRSS) and 571–580 (SAAAMTSTAS). Phosphoserine occurs at positions 667 and 675. The interval 687–731 (LGGRSYKTLPQVSPKTPPPMAPKTPPPTTPKTPPPVAPKPGSRGL) is disordered. A compositionally biased stretch (pro residues) spans 701 to 724 (KTPPPMAPKTPPPTTPKTPPPVAP). 2 positions are modified to phosphothreonine: Thr-702 and Thr-710. An Omega-N-methylarginine modification is found at Arg-754. A disordered region spans residues 772–797 (EATSGSSLNPGLRPRSPSPTPSLPPS). Phosphoserine is present on residues Ser-787 and Ser-789. Position 791 is a phosphothreonine (Thr-791). Arg-805, Arg-825, and Arg-888 each carry omega-N-methylarginine. Residue Ser-890 is modified to Phosphoserine. Phosphothreonine is present on residues Thr-891 and Thr-897. Arg-909 is subject to Omega-N-methylarginine. Asymmetric dimethylarginine; alternate is present on Arg-920. Arg-920 carries the omega-N-methylarginine; alternate modification. 2 positions are modified to omega-N-methylarginine: Arg-953 and Arg-955.

It belongs to the synaptopodin family.

The protein resides in the cytoplasm. Its subcellular location is the cytoskeleton. In terms of biological role, actin-associated protein that may play a role in modulating actin-based shape. The chain is Synaptopodin 2-like protein (Synpo2l) from Mus musculus (Mouse).